A 359-amino-acid chain; its full sequence is uncharacterized protein (359 aa).

The region spanning 163–275 (VVDTSCIIDG…SKVANLQKVQ (113 aa)) is the PINc domain. Residues aspartate 165 and aspartate 244 each coordinate Mg(2+). The 62-residue stretch at 289 to 350 (IYLPGDSLEL…LQTSAGRMIF (62 aa)) folds into the TRAM domain.

Belongs to the ycf81 family. It in the central section; belongs to the PINc/VapC protein family. Requires Mg(2+) as cofactor.

In terms of biological role, an RNase. This is an uncharacterized protein from Synechocystis sp. (strain ATCC 27184 / PCC 6803 / Kazusa).